A 698-amino-acid polypeptide reads, in one-letter code: D-(-)-3-hydroxybutyrate oligomer hydrolase (698 aa).

Positions 1–32 (MTTIRGGSRRASLPALALLGVLLGACHSDDNA) are cleaved as a signal peptide. The active-site Charge relay system is the Ser-310.

Belongs to the D-(-)-3-hydroxybutyrate oligomer hydrolase family.

The protein resides in the secreted. The catalysed reaction is (3R)-hydroxybutanoate dimer + H2O = 2 (R)-3-hydroxybutanoate + H(+). The protein operates within lipid metabolism; butanoate metabolism. Its function is as follows. Participates in the degradation of poly-3-hydroxybutyrate (PHB). It works downstream of poly(3-hydroxybutyrate) depolymerase, hydrolyzing D(-)-3-hydroxybutyrate oligomers of various length (3HB-oligomers) into 3HB-monomers. The chain is D-(-)-3-hydroxybutyrate oligomer hydrolase from Burkholderia thailandensis (strain ATCC 700388 / DSM 13276 / CCUG 48851 / CIP 106301 / E264).